Consider the following 151-residue polypeptide: 3-hydroxyacyl-[acyl-carrier-protein] dehydratase FabZ (151 aa).

The active site involves H58.

This sequence belongs to the thioester dehydratase family. FabZ subfamily.

Its subcellular location is the cytoplasm. The catalysed reaction is a (3R)-hydroxyacyl-[ACP] = a (2E)-enoyl-[ACP] + H2O. Its function is as follows. Involved in unsaturated fatty acids biosynthesis. Catalyzes the dehydration of short chain beta-hydroxyacyl-ACPs and long chain saturated and unsaturated beta-hydroxyacyl-ACPs. The chain is 3-hydroxyacyl-[acyl-carrier-protein] dehydratase FabZ from Histophilus somni (strain 129Pt) (Haemophilus somnus).